A 207-amino-acid polypeptide reads, in one-letter code: Outer-membrane lipoprotein carrier protein (207 aa).

The signal sequence occupies residues 1-21 (MRAIRMLLVSALALGTVTAYA).

The protein belongs to the LolA family. Monomer.

Its subcellular location is the periplasm. Its function is as follows. Participates in the translocation of lipoproteins from the inner membrane to the outer membrane. Only forms a complex with a lipoprotein if the residue after the N-terminal Cys is not an aspartate (The Asp acts as a targeting signal to indicate that the lipoprotein should stay in the inner membrane). The polypeptide is Outer-membrane lipoprotein carrier protein (Pseudomonas putida (strain GB-1)).